Reading from the N-terminus, the 171-residue chain is Antimicrobial protein CAP18 (171 aa).

Positions 1–29 are cleaved as a signal peptide; the sequence is METHKHGPSLAWWSLLLLLLGLLMPPAIA. 2 disulfide bridges follow: Cys-85/Cys-96 and Cys-107/Cys-124.

It belongs to the cathelicidin family. As to expression, neutrophils.

It localises to the secreted. Functionally, CAP18 binds to the lipid A moiety of bacterial lipopolysaccharides (LPS), a glycolipid present in the outer membrane of all Gram-negative bacteria. Has antibiotic activity. This chain is Antimicrobial protein CAP18 (CAP18), found in Oryctolagus cuniculus (Rabbit).